We begin with the raw amino-acid sequence, 307 residues long: MENKDGFLVINKDKGCTSHDCVKQIRKLLNTRKVGHTGTLDPEVIGTLPIAIGSATRFIQYLPQGKTYIGQIKLGIRTNTDDIHGEIINQKCWPKISDEKLDQYLNKFRGLIKQIPPKVSSVHVNGERAYKKSFNNENFELAPREVKIDELILMKWDQINGIIELKINCSAGTYIRAIARDLGEILNSEGCLLQLKRISACGFHEKNSIKISDIKKGIDQKNASNFIIPTISALNHISTLILNKEEDINFWQTGRAIKFDINYFNEGNNFDNKKPIKVVDKRKMLLGIGFLNKELTNINPKLVLNAK.

D41 functions as the Nucleophile in the catalytic mechanism.

The protein belongs to the pseudouridine synthase TruB family. Type 1 subfamily.

The enzyme catalyses uridine(55) in tRNA = pseudouridine(55) in tRNA. Responsible for synthesis of pseudouridine from uracil-55 in the psi GC loop of transfer RNAs. The polypeptide is tRNA pseudouridine synthase B (Prochlorococcus marinus (strain MIT 9312)).